The chain runs to 134 residues: Large-conductance mechanosensitive channel (134 aa).

2 helical membrane passes run 16-36 (VIDL…VTAL) and 81-101 (GDFI…FIVV).

The protein belongs to the MscL family. As to quaternary structure, homopentamer.

Its subcellular location is the cell inner membrane. In terms of biological role, channel that opens in response to stretch forces in the membrane lipid bilayer. May participate in the regulation of osmotic pressure changes within the cell. The chain is Large-conductance mechanosensitive channel from Stenotrophomonas maltophilia (strain K279a).